The following is a 443-amino-acid chain: Major royal jelly protein 7 (443 aa).

A signal peptide spans 1-17 (MTRWLFMVACLGIACQG). N145, N161, N178, and N321 each carry an N-linked (GlcNAc...) asparagine glycan.

This sequence belongs to the major royal jelly protein family. Found in and secreted from the hypopharyngeal glands of the worker honey bee (at protein level); expression peaks at 12 days post eclosion. Expressed in the brains of adult worker bees peaking at 12 days post eclosion (at protein level). Expressed in the spermatheca of adult queen bees (at protein level); Expression levels are higher in mated queens than in virgin queens.

It is found in the secreted. Component of royal jelly, a substance produced in the hypopharyngeal gland containing proteins, free amino acids, fatty acids, sugars and other nutrients, which is fed to developing larvae by worker nurse bees. All larvae are fed some royal jelly (also known as worker jelly) early in their development but it forms the principal source of nutrition for larvae destined to become queen bees. Produced in the spermatheca of adult queen bees, along with other major royal jelly proteins, where it may act as a nutrient supply for sperm stored by mated queens, or be involved in energy metabolism. This Apis mellifera (Honeybee) protein is Major royal jelly protein 7.